A 130-amino-acid chain; its full sequence is Large ribosomal subunit protein bL20 (130 aa).

It belongs to the bacterial ribosomal protein bL20 family.

Its function is as follows. Binds directly to 23S ribosomal RNA and is necessary for the in vitro assembly process of the 50S ribosomal subunit. It is not involved in the protein synthesizing functions of that subunit. This chain is Large ribosomal subunit protein bL20, found in Clavibacter michiganensis subsp. michiganensis (strain NCPPB 382).